The primary structure comprises 407 residues: Eukaryotic initiation factor 4A-II (407 aa).

Positions 1-23 are disordered; it reads MSGGSADYSRDHGGPEGMEPDGV. The Q motif signature appears at 33-61; sequence DNFDDMNLKESLLRGIYAYGFEKPSAIQQ. Residues 64 to 235 form the Helicase ATP-binding domain; that stretch reads IIPCIKGYDV…KKFMREPIRI (172 aa). 77–84 lines the ATP pocket; the sequence is AQSGTGKT. The DEAD box signature appears at 183 to 186; that stretch reads DEAD. The Helicase C-terminal domain occupies 246 to 407; the sequence is GIKQFYINVE…EMPMNVADLI (162 aa).

This sequence belongs to the DEAD box helicase family. eIF4A subfamily. EIF4F is a multi-subunit complex, the composition of which varies with external and internal environmental conditions. It is composed of at least EIF4A, EIF4E and EIF4G1/EIFFG3. Interacts with EIF4E.

It carries out the reaction ATP + H2O = ADP + phosphate + H(+). Functionally, ATP-dependent RNA helicase which is a subunit of the eIF4F complex involved in cap recognition and is required for mRNA binding to ribosome. In the current model of translation initiation, eIF4A unwinds RNA secondary structures in the 5'-UTR of mRNAs which is necessary to allow efficient binding of the small ribosomal subunit, and subsequent scanning for the initiator codon. This chain is Eukaryotic initiation factor 4A-II (EIF4A2), found in Gallus gallus (Chicken).